A 462-amino-acid polypeptide reads, in one-letter code: Kinetochore protein nsk1 (462 aa).

A compositionally biased stretch (polar residues) spans 104-120 (PSKNHETSLSPSKSTID). Disordered regions lie at residues 104-161 (PSKN…CPGI), 180-240 (EKYG…PLRT), and 320-462 (NQLF…NIQS). Positions 121–138 (NNERKLDNEIDNYKHDVK) are enriched in basic and acidic residues. The segment covering 146-156 (GKTSNPSQGTT) has biased composition (polar residues). Positions 180–189 (EKYGKTDLGK) are enriched in basic and acidic residues. Residues 229–240 (KNRSSTFSPLRT) are compositionally biased toward polar residues. The span at 324-333 (KSEEEKDPVG) shows a compositional bias: basic and acidic residues. Polar residues predominate over residues 422–444 (WPQNLAKNNINSEPNTPTKSNID). Residues 449–462 (HSARAHKTRKNIQS) show a composition bias toward basic residues.

In terms of assembly, interacts with dlc1. The dlc1-nsk1 complex seems to oligomerize in chain-like structures. Also binds directly to spindle microtubules. In terms of processing, phosphorylated by cdk1 at prometaphase arrest. Phosphorylation prevents nsk1 kinetochore and spindle targeting. Dephosphorylated by clp1 at anaphase onset controls its relocalization.

It is found in the nucleus. It localises to the nucleolus. The protein resides in the cytoplasm. Its subcellular location is the cytoskeleton. The protein localises to the spindle. It is found in the chromosome. It localises to the centromere. The protein resides in the kinetochore. Ensures chromosome alignment and accurate chromosome segregation during mitosis. Promotes proper kinetochore-microtubule (k-MT) interactions during anaphase B. The phosphorylation status of nsk1 affects the proper k-MT coupling, ensuring that it interacts stably only at the correct time during mitosis. The polypeptide is Kinetochore protein nsk1 (nsk1) (Schizosaccharomyces pombe (strain 972 / ATCC 24843) (Fission yeast)).